The primary structure comprises 1073 residues: Probable inorganic carbon transporter subunit DabA 2 (1073 aa).

Residues 1-20 (MSSGNTSSQNHSPVNNQPTR) show a composition bias toward polar residues. The segment at 1 to 35 (MSSGNTSSQNHSPVNNQPTRLKSPLPALHKDTQPN) is disordered. The Zn(2+) site is built by Cys535, Asp537, His721, and Cys736.

The protein belongs to the inorganic carbon transporter (TC 9.A.2) DabA family. As to quaternary structure, forms a complex with DabB. Requires Zn(2+) as cofactor.

The protein resides in the cell inner membrane. Functionally, part of an energy-coupled inorganic carbon pump. This Rhodopirellula baltica (strain DSM 10527 / NCIMB 13988 / SH1) protein is Probable inorganic carbon transporter subunit DabA 2.